A 168-amino-acid polypeptide reads, in one-letter code: Ribosome maturation factor RimM (168 aa).

In terms of domain architecture, PRC barrel spans 96-168; sequence VDEYYWGDLI…TIRVDWQKDW (73 aa).

Belongs to the RimM family. Binds ribosomal protein uS19.

It localises to the cytoplasm. In terms of biological role, an accessory protein needed during the final step in the assembly of 30S ribosomal subunit, possibly for assembly of the head region. Essential for efficient processing of 16S rRNA. May be needed both before and after RbfA during the maturation of 16S rRNA. It has affinity for free ribosomal 30S subunits but not for 70S ribosomes. This Aromatoleum aromaticum (strain DSM 19018 / LMG 30748 / EbN1) (Azoarcus sp. (strain EbN1)) protein is Ribosome maturation factor RimM.